Consider the following 197-residue polypeptide: Transcription factor FapR (197 aa).

Belongs to the FapR family.

Functionally, transcriptional factor involved in regulation of membrane lipid biosynthesis by repressing genes involved in fatty acid and phospholipid metabolism. This chain is Transcription factor FapR, found in Bacillus mycoides (strain KBAB4) (Bacillus weihenstephanensis).